A 352-amino-acid polypeptide reads, in one-letter code: DNA polymerase IV (352 aa).

The 181-residue stretch at isoleucine 6–glycine 186 folds into the UmuC domain. Mg(2+) contacts are provided by aspartate 10 and aspartate 104. Glutamate 105 is a catalytic residue.

The protein belongs to the DNA polymerase type-Y family. In terms of assembly, monomer. The cofactor is Mg(2+).

The protein localises to the cytoplasm. The enzyme catalyses DNA(n) + a 2'-deoxyribonucleoside 5'-triphosphate = DNA(n+1) + diphosphate. In terms of biological role, poorly processive, error-prone DNA polymerase involved in untargeted mutagenesis. Copies undamaged DNA at stalled replication forks, which arise in vivo from mismatched or misaligned primer ends. These misaligned primers can be extended by PolIV. Exhibits no 3'-5' exonuclease (proofreading) activity. May be involved in translesional synthesis, in conjunction with the beta clamp from PolIII. The protein is DNA polymerase IV of Neisseria meningitidis serogroup C / serotype 2a (strain ATCC 700532 / DSM 15464 / FAM18).